The following is a 231-amino-acid chain: 2-C-methyl-D-erythritol 4-phosphate cytidylyltransferase (231 aa).

It belongs to the IspD/TarI cytidylyltransferase family. IspD subfamily.

The enzyme catalyses 2-C-methyl-D-erythritol 4-phosphate + CTP + H(+) = 4-CDP-2-C-methyl-D-erythritol + diphosphate. Its pathway is isoprenoid biosynthesis; isopentenyl diphosphate biosynthesis via DXP pathway; isopentenyl diphosphate from 1-deoxy-D-xylulose 5-phosphate: step 2/6. Its function is as follows. Catalyzes the formation of 4-diphosphocytidyl-2-C-methyl-D-erythritol from CTP and 2-C-methyl-D-erythritol 4-phosphate (MEP). This Lysinibacillus sphaericus (strain C3-41) protein is 2-C-methyl-D-erythritol 4-phosphate cytidylyltransferase.